A 156-amino-acid polypeptide reads, in one-letter code: Sec-independent protein translocase protein TatB (156 aa).

A helical transmembrane segment spans residues 2–22 (FSSVGWGEIFLLVVVGLVVIG). Residues 100–156 (KIMAEGTEGEAQRNKQAADNNANVVERPADGSTARPTQNDPKDGPNYSGGVSWTDII) form a disordered region. Positions 113 to 122 (NKQAADNNAN) are enriched in polar residues.

Belongs to the TatB family. In terms of assembly, the Tat system comprises two distinct complexes: a TatABC complex, containing multiple copies of TatA, TatB and TatC subunits, and a separate TatA complex, containing only TatA subunits. Substrates initially bind to the TatABC complex, which probably triggers association of the separate TatA complex to form the active translocon.

It is found in the cell membrane. Its function is as follows. Part of the twin-arginine translocation (Tat) system that transports large folded proteins containing a characteristic twin-arginine motif in their signal peptide across membranes. Together with TatC, TatB is part of a receptor directly interacting with Tat signal peptides. TatB may form an oligomeric binding site that transiently accommodates folded Tat precursor proteins before their translocation. This is Sec-independent protein translocase protein TatB from Corynebacterium glutamicum (strain ATCC 13032 / DSM 20300 / JCM 1318 / BCRC 11384 / CCUG 27702 / LMG 3730 / NBRC 12168 / NCIMB 10025 / NRRL B-2784 / 534).